The following is a 125-amino-acid chain: Fumarate reductase subunit D (125 aa).

Helical transmembrane passes span 29–49, 64–84, and 102–122; these read VTAL…PLGW, NPIT…HAAH, and VIAL…GWML.

Belongs to the FrdD family. As to quaternary structure, part of an enzyme complex containing four subunits: a flavoprotein (FrdA), an iron-sulfur protein (FrdB), and two hydrophobic anchor proteins (FrdC and FrdD).

It localises to the cell membrane. In terms of biological role, anchors the catalytic components of the fumarate reductase complex to the cell membrane, binds quinones. This Mycobacterium bovis (strain BCG / Tokyo 172 / ATCC 35737 / TMC 1019) protein is Fumarate reductase subunit D.